We begin with the raw amino-acid sequence, 334 residues long: Replication factor C small subunit (334 aa).

Residue 49 to 56 (GPPGVGKT) coordinates ATP.

Belongs to the activator 1 small subunits family. RfcS subfamily. Heteromultimer composed of small subunits (RfcS) and large subunits (RfcL).

Its function is as follows. Part of the RFC clamp loader complex which loads the PCNA sliding clamp onto DNA. This Methanosarcina barkeri (strain Fusaro / DSM 804) protein is Replication factor C small subunit.